The primary structure comprises 263 residues: Thiamine thiazole synthase (263 aa).

NAD(+) contacts are provided by residues serine 36, 55–56, glycine 63, valine 127, and 157–159; these read ER and HVD. Residues aspartate 159 and histidine 174 each coordinate Fe cation. Methionine 228 provides a ligand contact to NAD(+). Residue arginine 238 participates in glycine binding.

Belongs to the THI4 family. Homooctamer; tetramer of dimers. Fe(2+) is required as a cofactor.

It catalyses the reaction hydrogen sulfide + glycine + NAD(+) = ADP-5-ethyl-4-methylthiazole-2-carboxylate + nicotinamide + 3 H2O + H(+). Its pathway is cofactor biosynthesis; thiamine diphosphate biosynthesis. Functionally, involved in the biosynthesis of the thiazole moiety of thiamine. Catalyzes the conversion of NAD and glycine to adenosine diphosphate 5-(2-hydroxyethyl)-4-methylthiazole-2-carboxylate (ADT), an adenylated thiazole intermediate, using free sulfide as a source of sulfur. This Solidesulfovibrio magneticus (strain ATCC 700980 / DSM 13731 / RS-1) (Desulfovibrio magneticus) protein is Thiamine thiazole synthase.